The chain runs to 367 residues: Queuine tRNA-ribosyltransferase (367 aa).

Catalysis depends on Asp-92, which acts as the Proton acceptor. Substrate-binding positions include 92–96 (DSGGF), Asp-146, Gln-188, and Gly-215. An RNA binding region spans residues 246–252 (GVGTPKD). Residue Asp-265 is the Nucleophile of the active site. Zn(2+) contacts are provided by Cys-303, Cys-305, Cys-308, and His-334.

The protein belongs to the queuine tRNA-ribosyltransferase family. As to quaternary structure, homodimer. Within each dimer, one monomer is responsible for RNA recognition and catalysis, while the other monomer binds to the replacement base PreQ1. Requires Zn(2+) as cofactor.

It carries out the reaction 7-aminomethyl-7-carbaguanine + guanosine(34) in tRNA = 7-aminomethyl-7-carbaguanosine(34) in tRNA + guanine. Its pathway is tRNA modification; tRNA-queuosine biosynthesis. Its function is as follows. Catalyzes the base-exchange of a guanine (G) residue with the queuine precursor 7-aminomethyl-7-deazaguanine (PreQ1) at position 34 (anticodon wobble position) in tRNAs with GU(N) anticodons (tRNA-Asp, -Asn, -His and -Tyr). Catalysis occurs through a double-displacement mechanism. The nucleophile active site attacks the C1' of nucleotide 34 to detach the guanine base from the RNA, forming a covalent enzyme-RNA intermediate. The proton acceptor active site deprotonates the incoming PreQ1, allowing a nucleophilic attack on the C1' of the ribose to form the product. After dissociation, two additional enzymatic reactions on the tRNA convert PreQ1 to queuine (Q), resulting in the hypermodified nucleoside queuosine (7-(((4,5-cis-dihydroxy-2-cyclopenten-1-yl)amino)methyl)-7-deazaguanosine). The chain is Queuine tRNA-ribosyltransferase from Francisella tularensis subsp. mediasiatica (strain FSC147).